The chain runs to 411 residues: Dual specificity protein phosphatase Mpk3 (411 aa).

The 128-residue stretch at aspartate 22 to glutamate 149 folds into the Rhodanese domain. Residues aspartate 184–glutamate 197 are compositionally biased toward low complexity. Residues aspartate 184 to histidine 209 form a disordered region. One can recognise a Tyrosine-protein phosphatase domain in the interval alanine 214–leucine 358. The active-site Phosphocysteine intermediate is cysteine 302.

It belongs to the protein-tyrosine phosphatase family. Non-receptor class dual specificity subfamily. In terms of assembly, interacts (via N-terminal region) with phosphorylated rl. In terms of tissue distribution, ubiquitous expression in eye and wing imaginal disks. Enriched in ovary.

The protein localises to the cytoplasm. The enzyme catalyses O-phospho-L-tyrosyl-[protein] + H2O = L-tyrosyl-[protein] + phosphate. It catalyses the reaction O-phospho-L-seryl-[protein] + H2O = L-seryl-[protein] + phosphate. It carries out the reaction O-phospho-L-threonyl-[protein] + H2O = L-threonyl-[protein] + phosphate. Its activity is regulated as follows. Activity abolished by tyrosine phosphatase inhibitor sodium vanadate. Activated by rl. Negatively regulates the activity of members of the MAP kinase family in response to changes in the cellular environment. Has a specificity for the ERK family. Acts as a negative regulator in a variety of developmental processes including cell differentiation and proliferation controlled by the Ras/ERK pathway. Suppresses the photoreceptor cell differentiation and wing vein formation. Required for proper oogenesis and early embryogenesis. Functions autonomously in a subset of photoreceptor progenitor cells in eye imaginal disks. Also appears to be required in surrounding non-neuronal cells for ommatidial patterning and photoreceptor differentiation. Plays a role in the maintenance of epithelial integrity during tracheal development. This is Dual specificity protein phosphatase Mpk3 (Mkp3) from Drosophila melanogaster (Fruit fly).